Consider the following 100-residue polypeptide: Urease subunit gamma (100 aa).

Belongs to the urease gamma subunit family. Heterotrimer of UreA (gamma), UreB (beta) and UreC (alpha) subunits. Three heterotrimers associate to form the active enzyme.

It localises to the cytoplasm. It catalyses the reaction urea + 2 H2O + H(+) = hydrogencarbonate + 2 NH4(+). Its pathway is nitrogen metabolism; urea degradation; CO(2) and NH(3) from urea (urease route): step 1/1. In Rhizobium etli (strain CIAT 652), this protein is Urease subunit gamma.